We begin with the raw amino-acid sequence, 251 residues long: Triosephosphate isomerase (251 aa).

Residue 10-12 (NWK) coordinates substrate. The active-site Electrophile is H98. E169 serves as the catalytic Proton acceptor. Residues G175, S213, and 234 to 235 (GG) contribute to the substrate site.

The protein belongs to the triosephosphate isomerase family. In terms of assembly, homodimer.

It is found in the cytoplasm. It catalyses the reaction D-glyceraldehyde 3-phosphate = dihydroxyacetone phosphate. Its pathway is carbohydrate biosynthesis; gluconeogenesis. It participates in carbohydrate degradation; glycolysis; D-glyceraldehyde 3-phosphate from glycerone phosphate: step 1/1. Involved in the gluconeogenesis. Catalyzes stereospecifically the conversion of dihydroxyacetone phosphate (DHAP) to D-glyceraldehyde-3-phosphate (G3P). This Paracidovorax citrulli (strain AAC00-1) (Acidovorax citrulli) protein is Triosephosphate isomerase.